A 329-amino-acid polypeptide reads, in one-letter code: Putative GTPase Obg (329 aa).

Residues 1–159 (MQFIDQARIM…WPLQLELKLL (159 aa)) enclose the Obg domain. The region spanning 160–328 (AEVGIIGLPN…LKTQIWQQLG (169 aa)) is the OBG-type G domain. GTP contacts are provided by residues 166-173 (GLPNAGKS), 191-195 (FTTLI), 213-216 (DIPG), 280-283 (SKIE), and 309-311 (SSA). Residues S173 and T193 each coordinate Mg(2+).

It belongs to the TRAFAC class OBG-HflX-like GTPase superfamily. OBG GTPase family. Monomer. Mg(2+) serves as cofactor.

The protein localises to the plastid. It localises to the organellar chromatophore. Functionally, an essential GTPase which binds GTP, GDP and possibly (p)ppGpp with moderate affinity, with high nucleotide exchange rates and a fairly low GTP hydrolysis rate. The protein is Putative GTPase Obg of Paulinella chromatophora.